The chain runs to 455 residues: Probable glycine dehydrogenase (decarboxylating) subunit 1 (455 aa).

This sequence belongs to the GcvP family. N-terminal subunit subfamily. As to quaternary structure, the glycine cleavage system is composed of four proteins: P, T, L and H. In this organism, the P 'protein' is a heterodimer of two subunits.

The enzyme catalyses N(6)-[(R)-lipoyl]-L-lysyl-[glycine-cleavage complex H protein] + glycine + H(+) = N(6)-[(R)-S(8)-aminomethyldihydrolipoyl]-L-lysyl-[glycine-cleavage complex H protein] + CO2. The glycine cleavage system catalyzes the degradation of glycine. The P protein binds the alpha-amino group of glycine through its pyridoxal phosphate cofactor; CO(2) is released and the remaining methylamine moiety is then transferred to the lipoamide cofactor of the H protein. The protein is Probable glycine dehydrogenase (decarboxylating) subunit 1 of Francisella tularensis subsp. mediasiatica (strain FSC147).